A 757-amino-acid polypeptide reads, in one-letter code: MKVFCEVLEELYKKVLLGATLENDSHDYIFYLNPAVSDQDCSTATSLEWANTCGIQGRHQPISVGVAPIAVAPVCLKTNSQMSGSREVMLLQLTVIKVMTTRILSVKTEFHAKEQYRDVIKILLESAKVDSKLICMFQNSDKLLSHMAAQCLALLLYFQLREKITLSNSWIAFCQKNLSEYSESNKAIYCLWTLTAIIKEIFKDSCSQKTEILKQFLTHFDTIFEVFYNSLFSQHFENCRDTSKIVNILMCFLDLLELLIASRIHLKLHFTCQRILFLKPSCMLEVITWPIQAFVKRKVIIFLKKCLLCKVGEDLCRGSVPALMPPDHHVAVDMLALANAVLQAVNSGLLKTLSVYEKHSFFGGDEVQPECELITSPDHVILRAASLVIMKSLEIKFQNYSSASEVKVDLQRFMSELLTFLKPHLQPSLQLHNPCKWLSRVFIEQDDDMLEAAKASLGIYLTLTRGCEATESLTQGKEMWDHHTHENGYNPHCIFLFFLKNIGFDSTVLLDFLISSETCFLEYFVRYLKLLQKDWDNFFTICNNFDATESKYDISICGCVPSLVQDQSSNQTIPHRLTAPHSHRDVCARHSWASDAPSEPLKAVMSKGAHTMCASSLSSPRASQSLVDYDSSDDSDVESTEQCLANSKQTSLHQQATKEIQDAAGTSRDKKEFSLEPPSRPLVLKEFDTAFSFDCEVAPNDVVSEVGIFYRIVKCFQELQDAICRLQKKNLFPYNPTALLKLLKYIEVISNKTMNTL.

S635 carries the phosphoserine modification.

Belongs to the protein lines family. As to expression, expressed in adult testis, prostate, prostate, spleen, thymus, skeletal muscle, fetal kidney and brain.

The chain is Protein Lines homolog 1 from Homo sapiens (Human).